The chain runs to 476 residues: Proline dehydrogenase 2, mitochondrial (476 aa).

Residues 1 to 29 (MANRFLRPNLIHRFSTVSPVGPPTTIIPE) constitute a mitochondrion transit peptide.

It belongs to the proline oxidase family. Requires FAD as cofactor. In terms of tissue distribution, expressed in the vascular tissue and in the abscission zone of petals, sepals, stamina, pistils and siliques. Not detected in petioles.

The protein resides in the mitochondrion. It catalyses the reaction L-proline + a quinone = (S)-1-pyrroline-5-carboxylate + a quinol + H(+). It participates in amino-acid degradation; L-proline degradation into L-glutamate; L-glutamate from L-proline: step 1/2. Converts proline to delta-1-pyrroline-5-carboxylate. The sequence is that of Proline dehydrogenase 2, mitochondrial (POX2) from Arabidopsis thaliana (Mouse-ear cress).